Reading from the N-terminus, the 510-residue chain is Facilitated glucose transporter protein 1 (510 aa).

Residues 1–29 are disordered; that stretch reads MSEKSRSDTSATASLSDSSKSPSSYSTPG. Residues 1–46 are Cytoplasmic-facing; sequence MSEKSRSDTSATASLSDSSKSPSSYSTPGTTTQKIIFPDGKLTKCL. Residues 8–29 are compositionally biased toward low complexity; sequence DTSATASLSDSSKSPSSYSTPG. The helical transmembrane segment at 47–67 threads the bilayer; that stretch reads AFSAFVITLASFQFGYHIGCV. Over 68 to 100 the chain is Extracellular; sequence NAPGGLITEWIIGSHKDLFDKELSRENADLAWS. A helical membrane pass occupies residues 101-121; sequence VAVSVFAVGGMIGGLSSGWLA. The Cytoplasmic portion of the chain corresponds to 122–127; the sequence is DKVGRR. Residues 128–146 traverse the membrane as a helical segment; sequence GALFYNNLLALAAAALMGL. The Extracellular segment spans residues 147 to 160; sequence AKSVGAYPMVILGR. A helical membrane pass occupies residues 161-181; sequence LIIGLNCGFSSALVPMFLTEI. Residues 182 to 195 are Cytoplasmic-facing; sequence SPNNLRGMLGSLHQ. D-glucose is bound at residue Gln-195. Residues 196–216 form a helical membrane-spanning segment; it reads LLVTIAILVSQIFGLPHLLGT. At 217–219 the chain is on the extracellular side; the sequence is GDR. A helical transmembrane segment spans residues 220–240; sequence WPLIFAFTVVPAVLQLALLML. Topologically, residues 241 to 299 are cytoplasmic; the sequence is CPESPKYTMAVRGQRNEAESALKKLRDTEDVSTEIEAMQEEATAAGVQEKPKMGDMFKG. The chain crosses the membrane as a helical span at residues 300–320; the sequence is ALLWPMSIAIMMMLAQQLSGI. D-glucose contacts are provided by residues 315 to 316, Asn-321, and Asn-352; that span reads QQ. The Extracellular portion of the chain corresponds to 321–341; the sequence is NVAMFYSTVIFRGAGLTGNEP. The chain crosses the membrane as a helical span at residues 342 to 362; the sequence is FYATIGMGAVNVIMTLISVWL. Residues 363–373 are Cytoplasmic-facing; the sequence is VDHPKFGRRSL. Residues 374–394 form a helical membrane-spanning segment; it reads LLAGLTGMFVSTLLLVGALTI. Topologically, residues 395–409 are extracellular; sequence QNSGGDKWASYSAIG. A helical transmembrane segment spans residues 410-430; the sequence is FVLLFVISFATGPGAIPWFFV. Trp-427 lines the D-glucose pocket. Over 431–445 the chain is Cytoplasmic; sequence SEIFDSSARGNANSI. The helical transmembrane segment at 446–464 threads the bilayer; it reads AVMVNWAANLLVGLTFLPI. Residues 465 to 470 are Extracellular-facing; it reads NNLMQQ. Residues 471 to 491 form a helical membrane-spanning segment; it reads YSFFIFSGFLAFFIFYTWKFV. Residues 492–510 lie on the Cytoplasmic side of the membrane; the sequence is PETKGKSIEQIQAEFEKRK.

Belongs to the major facilitator superfamily. Sugar transporter (TC 2.A.1.1) family. Glucose transporter subfamily. As to expression, isoform a is expressed in pharyngeal muscle and intestinal cells in both embryos and adults (at protein level).

It is found in the cell membrane. The protein localises to the basolateral cell membrane. Functionally, facilitative glucose transporter that plays a role in glucose metabolism and regulation of longevity. May also play a role in lipid metabolism. Glucose transport activity of isoform a is competitively inhibited by mannose, galactose and fructose, suggesting ability to transport also other hexose sugars. In Caenorhabditis elegans, this protein is Facilitated glucose transporter protein 1.